The primary structure comprises 326 residues: uncharacterized protein (326 aa).

An ATP-binding site is contributed by 127 to 134; that stretch reads GATGSGKS.

The protein belongs to the GSP E family.

This is an uncharacterized protein from Escherichia coli (strain K12).